The following is an 834-amino-acid chain: DNA polymerase I, thermostable (834 aa).

The 87-residue stretch at Lys-176–Gln-262 folds into the 5'-3' exonuclease domain. The segment at Glu-412–Gly-834 is polymerase.

This sequence belongs to the DNA polymerase type-A family.

The enzyme catalyses DNA(n) + a 2'-deoxyribonucleoside 5'-triphosphate = DNA(n+1) + diphosphate. Has 5'-3' exonuclease activity and no 3'-5' exonuclease activity. The chain is DNA polymerase I, thermostable (polA) from Thermus caldophilus.